Consider the following 278-residue polypeptide: UPF0761 membrane protein NT05HA_1801 (278 aa).

Helical transmembrane passes span 32–52, 88–108, 123–143, 168–188, 203–223, and 232–252; these read MLAI…FPVF, QMSA…INSI, PIFT…LLVG, LLSF…YMVV, LIAA…IVTF, and AMAT…FVLL.

The protein belongs to the UPF0761 family.

It is found in the cell inner membrane. This is UPF0761 membrane protein NT05HA_1801 from Aggregatibacter aphrophilus (strain NJ8700) (Haemophilus aphrophilus).